Here is a 108-residue protein sequence, read N- to C-terminus: Small ribosomal subunit protein bS6 (108 aa).

This sequence belongs to the bacterial ribosomal protein bS6 family.

Its function is as follows. Binds together with bS18 to 16S ribosomal RNA. In Trichormus variabilis (strain ATCC 29413 / PCC 7937) (Anabaena variabilis), this protein is Small ribosomal subunit protein bS6.